A 263-amino-acid polypeptide reads, in one-letter code: Endonuclease 8 (263 aa).

The Schiff-base intermediate with DNA role is filled by Pro2. The active-site Proton donor is Glu3. Residue Lys53 is the Proton donor; for beta-elimination activity of the active site. The DNA site is built by Gln70, Arg125, and Asn169. The FPG-type zinc finger occupies 229–263 (KVFHRDGEPCERCGSIIEKTTLSSRPFYWCPGCQH). Arg253 serves as the catalytic Proton donor; for delta-elimination activity.

This sequence belongs to the FPG family. Requires Zn(2+) as cofactor.

It catalyses the reaction 2'-deoxyribonucleotide-(2'-deoxyribose 5'-phosphate)-2'-deoxyribonucleotide-DNA = a 3'-end 2'-deoxyribonucleotide-(2,3-dehydro-2,3-deoxyribose 5'-phosphate)-DNA + a 5'-end 5'-phospho-2'-deoxyribonucleoside-DNA + H(+). Involved in base excision repair of DNA damaged by oxidation or by mutagenic agents. Acts as a DNA glycosylase that recognizes and removes damaged bases. Has a preference for oxidized pyrimidines, such as thymine glycol, 5,6-dihydrouracil and 5,6-dihydrothymine. Has AP (apurinic/apyrimidinic) lyase activity and introduces nicks in the DNA strand. Cleaves the DNA backbone by beta-delta elimination to generate a single-strand break at the site of the removed base with both 3'- and 5'-phosphates. In Shigella sonnei (strain Ss046), this protein is Endonuclease 8.